The following is a 505-amino-acid chain: 4-trimethylaminobutyraldehyde dehydrogenase (505 aa).

NAD(+) is bound by residues K191 and 243–247 (GSVPT). The active-site Proton acceptor is the E265. C299 acts as the Nucleophile in catalysis. An NAD(+)-binding site is contributed by E402.

The protein belongs to the aldehyde dehydrogenase family. Homotetramer. In terms of tissue distribution, constitutively expressed in all organs tested: brain, eye, gill, GI, heart, liver, kidney, muscle, skin, testis and ovary.

It is found in the cytoplasm. It localises to the cytosol. It carries out the reaction 4-(trimethylamino)butanal + NAD(+) + H2O = 4-(trimethylamino)butanoate + NADH + 2 H(+). The catalysed reaction is an aldehyde + NAD(+) + H2O = a carboxylate + NADH + 2 H(+). The protein operates within amine and polyamine biosynthesis; carnitine biosynthesis. Functionally, converts gamma-trimethylaminobutyraldehyde into gamma-butyrobetaine with high efficiency (in vitro). Can catalyze the irreversible oxidation of a broad range of aldehydes to the corresponding acids in an NAD-dependent reaction, but with low efficiency. This chain is 4-trimethylaminobutyraldehyde dehydrogenase (aldh9A1), found in Oryzias latipes (Japanese rice fish).